Consider the following 70-residue polypeptide: Large ribosomal subunit protein eL38 (70 aa).

This sequence belongs to the eukaryotic ribosomal protein eL38 family.

This is Large ribosomal subunit protein eL38 (RpL38) from Anopheles gambiae (African malaria mosquito).